Consider the following 267-residue polypeptide: Phosphate import ATP-binding protein PstB 2 (267 aa).

Positions 21–262 (LSTKDLHVYY…AKLQSTSDYV (242 aa)) constitute an ABC transporter domain. 53–60 (GPSGCGKS) contacts ATP.

Belongs to the ABC transporter superfamily. Phosphate importer (TC 3.A.1.7) family. The complex is composed of two ATP-binding proteins (PstB), two transmembrane proteins (PstC and PstA) and a solute-binding protein (PstS).

Its subcellular location is the cell membrane. It carries out the reaction phosphate(out) + ATP + H2O = ADP + 2 phosphate(in) + H(+). Part of the ABC transporter complex PstSACB involved in phosphate import. Responsible for energy coupling to the transport system. This chain is Phosphate import ATP-binding protein PstB 2, found in Streptococcus mutans serotype c (strain ATCC 700610 / UA159).